We begin with the raw amino-acid sequence, 256 residues long: Thiazole synthase (256 aa).

Lysine 96 acts as the Schiff-base intermediate with DXP in catalysis. Residues glycine 157, 183-184 (AG), and 205-206 (NT) contribute to the 1-deoxy-D-xylulose 5-phosphate site.

It belongs to the ThiG family. As to quaternary structure, homotetramer. Forms heterodimers with either ThiH or ThiS.

It is found in the cytoplasm. It catalyses the reaction [ThiS sulfur-carrier protein]-C-terminal-Gly-aminoethanethioate + 2-iminoacetate + 1-deoxy-D-xylulose 5-phosphate = [ThiS sulfur-carrier protein]-C-terminal Gly-Gly + 2-[(2R,5Z)-2-carboxy-4-methylthiazol-5(2H)-ylidene]ethyl phosphate + 2 H2O + H(+). The protein operates within cofactor biosynthesis; thiamine diphosphate biosynthesis. Catalyzes the rearrangement of 1-deoxy-D-xylulose 5-phosphate (DXP) to produce the thiazole phosphate moiety of thiamine. Sulfur is provided by the thiocarboxylate moiety of the carrier protein ThiS. In vitro, sulfur can be provided by H(2)S. In Bacillus cereus (strain ATCC 10987 / NRS 248), this protein is Thiazole synthase.